Here is a 512-residue protein sequence, read N- to C-terminus: Probable DNA ligase (512 aa).

Residue E208 participates in ATP binding. The N6-AMP-lysine intermediate role is filled by K210. ATP is bound by residues R215, R230, E259, F299, R374, and K380.

Belongs to the ATP-dependent DNA ligase family. Mg(2+) is required as a cofactor.

It carries out the reaction ATP + (deoxyribonucleotide)n-3'-hydroxyl + 5'-phospho-(deoxyribonucleotide)m = (deoxyribonucleotide)n+m + AMP + diphosphate.. DNA ligase that seals nicks in double-stranded DNA during DNA replication, DNA recombination and DNA repair. The sequence is that of Probable DNA ligase from Streptomyces coelicolor (strain ATCC BAA-471 / A3(2) / M145).